A 752-amino-acid chain; its full sequence is Probable cell surface ferric reductase kap2 (752 aa).

Residues glycine 40–isoleucine 60 traverse the membrane as a helical segment. 2 N-linked (GlcNAc...) asparagine glycosylation sites follow: asparagine 118 and asparagine 133. The next 2 membrane-spanning stretches (helical) occupy residues isoleucine 157–leucine 177 and proline 195–leucine 215. A Ferric oxidoreductase domain is found at alanine 201–serine 348. 2 residues coordinate heme: histidine 237 and histidine 251. 3 helical membrane passes run glycine 241 to tryptophan 261, glycine 281 to leucine 301, and tyrosine 306 to tryptophan 326. 2 residues coordinate heme: histidine 313 and histidine 327. Residues phenylalanine 331 to valine 351 form a helical membrane-spanning segment. Residues tyrosine 349–aspartate 475 enclose the FAD-binding FR-type domain. An N-linked (GlcNAc...) asparagine glycan is attached at asparagine 357. Position 467 to 470 (glycine 467 to glycine 470) interacts with NADP(+). A helical membrane pass occupies residues valine 482–isoleucine 502. N-linked (GlcNAc...) asparagine glycosylation occurs at asparagine 627. Cysteine 714–glycine 715 is an NADP(+) binding site.

It belongs to the ferric reductase (FRE) family. FAD serves as cofactor. Heme is required as a cofactor.

Its subcellular location is the cell membrane. The enzyme catalyses 2 a Fe(II)-siderophore + NADP(+) + H(+) = 2 a Fe(III)-siderophore + NADPH. Its function is as follows. Probable cell surface ferric reductase that acts as a negative regulatory factor of growth and development. Involved in kojic acid production through the regulation of kojA expression. The chain is Probable cell surface ferric reductase kap2 from Aspergillus oryzae (strain ATCC 42149 / RIB 40) (Yellow koji mold).